The primary structure comprises 61 residues: Large ribosomal subunit protein uL30 (61 aa).

This sequence belongs to the universal ribosomal protein uL30 family. In terms of assembly, part of the 50S ribosomal subunit.

The sequence is that of Large ribosomal subunit protein uL30 from Lacticaseibacillus casei (strain BL23) (Lactobacillus casei).